The primary structure comprises 864 residues: Structure-specific endonuclease subunit SLX4 (864 aa).

Positions 35–54 are enriched in low complexity; the sequence is SPLSLPSPTSLLDFLSTSTS. Disordered stretches follow at residues 35 to 72, 89 to 113, 160 to 193, 288 to 318, 348 to 382, 413 to 432, and 625 to 771; these read SPLS…GKEV, VVSG…PGNA, KANQ…HIND, GLSD…NPPK, LSDE…EKKN, ANGH…HISN, and KTSN…ETLP. A compositionally biased stretch (basic and acidic residues) spans 58–72; that stretch reads ARSDTDGDKTQGKEV. 2 stretches are compositionally biased toward polar residues: residues 160-169 and 289-306; these read KANQTVSLQP and LSDS…SATS. Residues 307 to 317 are compositionally biased toward basic residues; it reads KPRRVKAKNPP. The span at 659–668 shows a compositional bias: polar residues; that stretch reads SIPQTATTQV. Residues 683-695 show a composition bias toward low complexity; sequence VPVPSRRSTSTSK. The segment covering 743 to 771 has biased composition (polar residues); the sequence is PESFNLPTTPLTIRSGKIPSTGTASETLP.

It belongs to the SLX4 family. Forms a heterodimer with SLX1. Phosphorylated in response to DNA damage.

It is found in the nucleus. Functionally, regulatory subunit of the SLX1-SLX4 structure-specific endonuclease that resolves DNA secondary structures generated during DNA repair and recombination. Has endonuclease activity towards branched DNA substrates, introducing single-strand cuts in duplex DNA close to junctions with ss-DNA. This chain is Structure-specific endonuclease subunit SLX4, found in Paracoccidioides brasiliensis (strain Pb03).